A 322-amino-acid polypeptide reads, in one-letter code: tRNA uridine(34) hydroxylase (322 aa).

In terms of domain architecture, Rhodanese spans 125-219 (QDPDTIVIDA…YGKDPEVKGQ (95 aa)). The active-site Cysteine persulfide intermediate is Cys-179.

This sequence belongs to the TrhO family.

The catalysed reaction is uridine(34) in tRNA + AH2 + O2 = 5-hydroxyuridine(34) in tRNA + A + H2O. In terms of biological role, catalyzes oxygen-dependent 5-hydroxyuridine (ho5U) modification at position 34 in tRNAs. This chain is tRNA uridine(34) hydroxylase, found in Bacillus velezensis (strain DSM 23117 / BGSC 10A6 / LMG 26770 / FZB42) (Bacillus amyloliquefaciens subsp. plantarum).